A 624-amino-acid chain; its full sequence is Plastin-2 (624 aa).

EF-hand domains are found at residues 9-44 (EEME…ANLP) and 49-84 (RVRE…LKSS). Ca(2+) contacts are provided by Asp-22, Asp-24, Asn-26, His-28, Glu-33, Asp-62, Asn-64, Asp-66, Lys-68, and Glu-73. 4 consecutive Calponin-homology (CH) domains span residues 118–234 (EEEK…KIGL), 262–373 (LSPE…NKYP), 392–501 (TREE…RRYT), and 513–621 (KIID…ARGM). Actin-binding stretches follow at residues 118–373 (EEEK…NKYP) and 392–621 (TREE…ARGM).

Monomer. In terms of tissue distribution, expressed by macrophages (at protein level).

The protein localises to the cytoplasm. Its subcellular location is the cytoskeleton. It is found in the cell junction. It localises to the cell projection. The protein resides in the ruffle membrane. In terms of biological role, actin-binding protein. Plays a role in the activation of T-cells. This chain is Plastin-2, found in Danio rerio (Zebrafish).